Reading from the N-terminus, the 454-residue chain is Zinc finger CCCH domain-containing protein 66 (454 aa).

Over residues 1-23 (MAAGAGAGGGGGEGDSNGGGTSP) the composition is skewed to gly residues. Residues 1-30 (MAAGAGAGGGGGEGDSNGGGTSPGGVSAAA) form a disordered region. 5 C3H1-type zinc fingers span residues 66–94 (RIGE…HPPN), 111–139 (RVGQ…HPRE), 157–185 (RPNE…HPQP), 318–346 (RPDQ…HPKE), and 364–392 (RPGE…HPMG). The tract at residues 405–454 (DVSSMHYQLSPSPGHPGILLDGGSGRSHRVPQSDSQQIPSGDGNAEREAS) is disordered. A compositionally biased stretch (polar residues) spans 434–443 (VPQSDSQQIP).

This Oryza sativa subsp. japonica (Rice) protein is Zinc finger CCCH domain-containing protein 66.